We begin with the raw amino-acid sequence, 253 residues long: Tryptophan synthase alpha chain (253 aa).

Residues glutamate 47 and aspartate 58 each act as proton acceptor in the active site.

It belongs to the TrpA family. In terms of assembly, tetramer of two alpha and two beta chains.

The enzyme catalyses (1S,2R)-1-C-(indol-3-yl)glycerol 3-phosphate + L-serine = D-glyceraldehyde 3-phosphate + L-tryptophan + H2O. The protein operates within amino-acid biosynthesis; L-tryptophan biosynthesis; L-tryptophan from chorismate: step 5/5. Functionally, the alpha subunit is responsible for the aldol cleavage of indoleglycerol phosphate to indole and glyceraldehyde 3-phosphate. The protein is Tryptophan synthase alpha chain of Syntrophotalea carbinolica (strain DSM 2380 / NBRC 103641 / GraBd1) (Pelobacter carbinolicus).